Consider the following 762-residue polypeptide: Probable inorganic carbon transporter subunit DabA (762 aa).

C279, D281, H461, and C476 together coordinate Zn(2+).

Belongs to the inorganic carbon transporter (TC 9.A.2) DabA family. In terms of assembly, forms a complex with DabB. The cofactor is Zn(2+).

It localises to the cell inner membrane. In terms of biological role, part of an energy-coupled inorganic carbon pump. This Legionella pneumophila (strain Corby) protein is Probable inorganic carbon transporter subunit DabA.